The chain runs to 290 residues: Ribosomal RNA small subunit methyltransferase A (290 aa).

6 residues coordinate S-adenosyl-L-methionine: asparagine 27, leucine 29, glycine 54, glutamate 75, aspartate 100, and asparagine 125.

The protein belongs to the class I-like SAM-binding methyltransferase superfamily. rRNA adenine N(6)-methyltransferase family. RsmA subfamily.

Its subcellular location is the cytoplasm. It catalyses the reaction adenosine(1518)/adenosine(1519) in 16S rRNA + 4 S-adenosyl-L-methionine = N(6)-dimethyladenosine(1518)/N(6)-dimethyladenosine(1519) in 16S rRNA + 4 S-adenosyl-L-homocysteine + 4 H(+). Its function is as follows. Specifically dimethylates two adjacent adenosines (A1518 and A1519) in the loop of a conserved hairpin near the 3'-end of 16S rRNA in the 30S particle. May play a critical role in biogenesis of 30S subunits. This chain is Ribosomal RNA small subunit methyltransferase A, found in Streptococcus equi subsp. zooepidemicus (strain H70).